Consider the following 573-residue polypeptide: Heat shock protein 60A (573 aa).

A mitochondrion-targeting transit peptide spans 1–57 (MFRLPVSLARSSISRQLAMRGYAKDVRFGPEVRAMMLQGVDVLADAVAVTMGPKGRN).

It belongs to the chaperonin (HSP60) family.

The protein localises to the mitochondrion matrix. In terms of biological role, prevents misfolding and promotes the refolding and proper assembly of unfolded polypeptides generated under stress conditions. The chain is Heat shock protein 60A from Drosophila melanogaster (Fruit fly).